The following is a 468-amino-acid chain: Glutamate--tRNA ligase (468 aa).

The 'HIGH' region signature appears at 11–21 (PSPTGFIHLGN). A 'KMSKS' region motif is present at residues 243 to 247 (KMSKR). Position 246 (lysine 246) interacts with ATP.

This sequence belongs to the class-I aminoacyl-tRNA synthetase family. Glutamate--tRNA ligase type 1 subfamily. As to quaternary structure, monomer.

Its subcellular location is the cytoplasm. The catalysed reaction is tRNA(Glu) + L-glutamate + ATP = L-glutamyl-tRNA(Glu) + AMP + diphosphate. Its function is as follows. Catalyzes the attachment of glutamate to tRNA(Glu) in a two-step reaction: glutamate is first activated by ATP to form Glu-AMP and then transferred to the acceptor end of tRNA(Glu). In Delftia acidovorans (strain DSM 14801 / SPH-1), this protein is Glutamate--tRNA ligase.